The chain runs to 439 residues: Rho GTPase-activating protein 1 (439 aa).

Met1 bears the N-acetylmethionine mark. Residues 28-48 (IDEKNWPSDEMPDFPKSDDSK) are compositionally biased toward basic and acidic residues. Residues 28 to 52 (IDEKNWPSDEMPDFPKSDDSKSSSP) are disordered. 4 positions are modified to phosphoserine: Ser44, Ser47, Ser50, and Ser51. One can recognise a CRAL-TRIO domain in the interval 63-218 (PYYDIARHQI…QVLKYDDFLK (156 aa)). The residue at position 65 (Tyr65) is a Phosphotyrosine. The residue at position 80 (Lys80) is an N6-acetyllysine. The short motif at 228-238 (PKPMPPRPPLP) is the SH3-binding element. One can recognise a Rho-GAP domain in the interval 244–431 (VSLQHLQEKN…FLLDHQGELF (188 aa)).

In terms of assembly, found in a complex with XPO7, EIF4A1, ARHGAP1, VPS26A, VPS29, VPS35 and SFN. Interacts with BNIPL. In terms of tissue distribution, ubiquitous.

The protein resides in the cytoplasm. In terms of biological role, GTPase activator for the Rho, Rac and Cdc42 proteins, converting them to the putatively inactive GDP-bound state. Cdc42 seems to be the preferred substrate. The protein is Rho GTPase-activating protein 1 (ARHGAP1) of Homo sapiens (Human).